The primary structure comprises 191 residues: Large ribosomal subunit protein uL3 (191 aa).

A disordered region spans residues 119–138 (AAHGSRFHRRPGSIGNREWP).

It belongs to the universal ribosomal protein uL3 family. Part of the 50S ribosomal subunit. Forms a cluster with proteins L14 and L19.

Its function is as follows. One of the primary rRNA binding proteins, it binds directly near the 3'-end of the 23S rRNA, where it nucleates assembly of the 50S subunit. In Helicobacter pylori (strain ATCC 700392 / 26695) (Campylobacter pylori), this protein is Large ribosomal subunit protein uL3 (rplC).